Consider the following 402-residue polypeptide: MLSEKTIEIVKSTVPLLQEKGVEITTRFYEILFSEHPELLNIFNHTNQKKGRQQQALANAVYAAATYIDNLEAIIPVVKQIGHKHRSLGIKAEHYPIVGTCLLRAIKEVAGAPDEVLNAWGEAYGVIADAFISIEAEMYEEAAHKEGGWKDFRNFVVVKKVKESDVITSFYLKPEDGGKVSSFIPGQYVTVQINIEGETYTHNRQYSLSDAPGKEYYRISVKKEKGVDTPDGKVSNYLHDHVKEGDMLPVSAPAGDFVLNMDSTLPVVLISGGVGITPMMSMLNTLIEQDSKRNVCFVHAAINSNTHAMKEHVEAVDNEYEQVKAYTCYSAPTEKDLEMKNFDKEGFVEREWLQTIIPTTEAEFYFCGPVPFMKHINAVLTDLGVKQEHIHYEFFGPAASLQ.

Positions 1-136 (MLSEKTIEIV…IADAFISIEA (136 aa)) constitute a Globin domain. H85 contributes to the heme b binding site. Catalysis depends on charge relay system residues Y95 and E135. Residues 147–402 (GGWKDFRNFV…EFFGPAASLQ (256 aa)) are reductase. The FAD-binding FR-type domain occupies 150–260 (KDFRNFVVVK…SAPAGDFVLN (111 aa)). Residues Y188 and 204–207 (RQYS) each bind FAD. Residue 273–278 (GVGITP) coordinates NADP(+). An FAD-binding site is contributed by 394 to 397 (FFGP).

It belongs to the globin family. Two-domain flavohemoproteins subfamily. The protein in the C-terminal section; belongs to the flavoprotein pyridine nucleotide cytochrome reductase family. It depends on heme b as a cofactor. FAD serves as cofactor.

It catalyses the reaction 2 nitric oxide + NADPH + 2 O2 = 2 nitrate + NADP(+) + H(+). The catalysed reaction is 2 nitric oxide + NADH + 2 O2 = 2 nitrate + NAD(+) + H(+). Its function is as follows. Is involved in NO detoxification in an aerobic process, termed nitric oxide dioxygenase (NOD) reaction that utilizes O(2) and NAD(P)H to convert NO to nitrate, which protects the bacterium from various noxious nitrogen compounds. Therefore, plays a central role in the inducible response to nitrosative stress. This Bacillus thuringiensis subsp. konkukian (strain 97-27) protein is Flavohemoprotein.